A 288-amino-acid polypeptide reads, in one-letter code: Small ribosomal subunit protein uS15m (288 aa).

The transit peptide at 1–50 (MRLFEGAFQPWKLASTNLMQQCLLLNKKSQFHTTCILQGLKKQKANQRRK) directs the protein to the mitochondrion.

The protein belongs to the universal ribosomal protein uS15 family. Component of the mitochondrial small ribosomal subunit (mt-SSU). Mature yeast 74S mitochondrial ribosomes consist of a small (37S) and a large (54S) subunit. The 37S small subunit contains a 15S ribosomal RNA (15S mt-rRNA) and at least 32 different proteins. The 54S large subunit contains a 21S rRNA (21S mt-rRNA) and at least 45 different proteins.

The protein resides in the mitochondrion. In terms of biological role, component of the mitochondrial ribosome (mitoribosome), a dedicated translation machinery responsible for the synthesis of mitochondrial genome-encoded proteins, including at least some of the essential transmembrane subunits of the mitochondrial respiratory chain. The mitoribosomes are attached to the mitochondrial inner membrane and translation products are cotranslationally integrated into the membrane. In Schizosaccharomyces pombe (strain 972 / ATCC 24843) (Fission yeast), this protein is Small ribosomal subunit protein uS15m (mrps28).